Reading from the N-terminus, the 40-residue chain is Photosystem II reaction center protein J (40 aa).

Residues 8–28 (IPLWLIGTLTGILVIGLIGIF) form a helical membrane-spanning segment.

The protein belongs to the PsbJ family. In terms of assembly, PSII is composed of 1 copy each of membrane proteins PsbA, PsbB, PsbC, PsbD, PsbE, PsbF, PsbH, PsbI, PsbJ, PsbK, PsbL, PsbM, PsbT, PsbX, PsbY, PsbZ, Psb30/Ycf12, at least 3 peripheral proteins of the oxygen-evolving complex and a large number of cofactors. It forms dimeric complexes.

It is found in the plastid. Its subcellular location is the chloroplast thylakoid membrane. One of the components of the core complex of photosystem II (PSII). PSII is a light-driven water:plastoquinone oxidoreductase that uses light energy to abstract electrons from H(2)O, generating O(2) and a proton gradient subsequently used for ATP formation. It consists of a core antenna complex that captures photons, and an electron transfer chain that converts photonic excitation into a charge separation. This chain is Photosystem II reaction center protein J, found in Phalaenopsis aphrodite subsp. formosana (Moth orchid).